A 137-amino-acid polypeptide reads, in one-letter code: ATP synthase epsilon chain (137 aa).

The protein belongs to the ATPase epsilon chain family. As to quaternary structure, F-type ATPases have 2 components, CF(1) - the catalytic core - and CF(0) - the membrane proton channel. CF(1) has five subunits: alpha(3), beta(3), gamma(1), delta(1), epsilon(1). CF(0) has three main subunits: a, b and c.

The protein localises to the cell inner membrane. Produces ATP from ADP in the presence of a proton gradient across the membrane. The chain is ATP synthase epsilon chain from Magnetococcus marinus (strain ATCC BAA-1437 / JCM 17883 / MC-1).